The following is a 79-amino-acid chain: Sulfur carrier protein TusA (79 aa).

Catalysis depends on cysteine 15, which acts as the Cysteine persulfide intermediate.

The protein belongs to the sulfur carrier protein TusA family. In terms of assembly, interacts with IscS.

It is found in the cytoplasm. It functions in the pathway tRNA modification. Its function is as follows. Sulfur carrier protein involved in sulfur trafficking in the cell. Part of a sulfur-relay system required for 2-thiolation during synthesis of 2-thiouridine of the modified wobble base 5-methylaminomethyl-2-thiouridine (mnm(5)s(2)U) in tRNA. Interacts with IscS and stimulates its cysteine desulfurase activity. Accepts an activated sulfur from IscS, which is then transferred to TusD, and thus determines the direction of sulfur flow from IscS to 2-thiouridine formation. Also appears to be involved in sulfur transfer for the biosynthesis of molybdopterin. This is Sulfur carrier protein TusA from Buchnera aphidicola subsp. Baizongia pistaciae (strain Bp).